The chain runs to 351 residues: MFLSKPSVYICLFTCVLQLSHSWSVNNFLMTGPKAYLIYSSSVAAGAQSGIEECKYQFAWDRWNCPERALQLSSHGGLRSANRETAFVHAISSAGVMYTLTRNCSLGDFDNCGCDDSRNGQLGGQGWLWGGCSDNVGFGEAISKQFVDALETGQDARAAMNLHNNEAGRKAVKGTMKRTCKCHGVSGSCTTQTCWLQLPEFREVGAHLKEKYHAALKVDLLQGAGNSAAGRGAIADTFRSISTRELVHLEDSPDYCLENKTLGLLGTEGRECLRRGRALGRWERRSCRRLCGDCGLAVEERRAETVSSCNCKFHWCCAVRCEQCRRRVTKYFCSRAERPRGGAAHKPGRKP.

Positions M1–S22 are cleaved as a signal peptide. A disulfide bridge connects residues C54 and C65. N103 is a glycosylation site (N-linked (GlcNAc...) asparagine). 10 disulfides stabilise this stretch: C104–C112, C114–C132, C180–C194, C182–C189, C256–C294, C272–C287, C291–C333, C309–C324, C311–C321, and C316–C317. S186 is lipidated: O-palmitoleoyl serine. N-linked (GlcNAc...) asparagine glycosylation occurs at N259.

The protein belongs to the Wnt family. In terms of processing, palmitoleoylation is required for efficient binding to frizzled receptors. Depalmitoleoylation leads to Wnt signaling pathway inhibition. Post-translationally, proteolytic processing by TIKI1 and TIKI2 promotes oxidation and formation of large disulfide-bond oligomers, leading to inactivation of WNT8B. Expression is restricted to the brain, and more specifically to the forebrain.

It is found in the secreted. The protein localises to the extracellular space. It localises to the extracellular matrix. Functionally, ligand for members of the frizzled family of seven transmembrane receptors. May play an important role in the development and differentiation of certain forebrain structures, notably the hippocampus. In Homo sapiens (Human), this protein is Protein Wnt-8b (WNT8B).